The chain runs to 139 residues: ATP synthase epsilon chain (139 aa).

It belongs to the ATPase epsilon chain family. In terms of assembly, F-type ATPases have 2 components, CF(1) - the catalytic core - and CF(0) - the membrane proton channel. CF(1) has five subunits: alpha(3), beta(3), gamma(1), delta(1), epsilon(1). CF(0) has three main subunits: a, b and c.

The protein resides in the cell inner membrane. In terms of biological role, produces ATP from ADP in the presence of a proton gradient across the membrane. This is ATP synthase epsilon chain from Pseudomonas entomophila (strain L48).